The primary structure comprises 277 residues: MKSGIRVALVTGSNKGIGLAIVRDLCRLFSGEVVLTARDVARGQAAVQQLQAEGLSPRFHQLDIDDLQSIRTLRDFLLKEYGGLDVLVNNAGIAFKVADPTPFHIQAEVTMKTNFFGTRDVCTELLPLIKPQGRVVNISSMMSLRALKSCSPELQQKFRSETITEEELVGLMNKFAEDTKKGVHQKEGWPSSAYGVTKIGVTVLSRIHARKLSEQRKGDKILLNACCPGWVRTDMAGPSATKSPEEGAETPVYLALLPLDAEGPHGQFVMEKRVEQW.

Residues Val10–Val34, Asp63–Ile64, and Asn90 each bind NADP(+). Ser30 carries the phosphoserine modification. Glutathione is bound by residues Phe95–Val97 and Gln106. Ser140 serves as a coordination point for substrate. Residue Ala193–Tyr194 participates in glutathione binding. Tyr194 acts as the Proton acceptor in catalysis. NADP(+)-binding positions include Tyr194–Lys198 and Val231–Thr233.

The protein belongs to the short-chain dehydrogenases/reductases (SDR) family. In terms of assembly, monomer.

The protein localises to the cytoplasm. The catalysed reaction is a secondary alcohol + NADP(+) = a ketone + NADPH + H(+). It carries out the reaction prostaglandin F2alpha + NADP(+) = prostaglandin E2 + NADPH + H(+). It catalyses the reaction prostaglandin E1 + NADP(+) = 15-oxoprostaglandin E1 + NADPH + H(+). The enzyme catalyses prostaglandin D2 + NADP(+) = 15-oxoprostaglandin D2 + NADPH + H(+). The catalysed reaction is menadione + NADPH + H(+) = menadiol + NADP(+). It carries out the reaction prostaglandin E2 + NADP(+) = 15-oxoprostaglandin E2 + NADPH + H(+). It catalyses the reaction prostaglandin F2alpha + NADP(+) = 15-oxoprostaglandin F2alpha + NADPH + H(+). The enzyme catalyses daunorubicin + NADPH + H(+) = 13-dihydrodaunorubicin + NADP(+). The catalysed reaction is S-nitrosoglutathione + NADPH + H(+) = S-(hydroxysulfenamide)glutathione + NADP(+). It carries out the reaction a primary alcohol + NADP(+) = an aldehyde + NADPH + H(+). It catalyses the reaction cortisol + NADPH + H(+) = 20beta-dihydrocortisol + NADP(+). The enzyme catalyses corticosterone + NADPH + H(+) = 20beta-dihydrocorticosterone + NADP(+). NADPH-dependent reductase with broad substrate specificity. Catalyzes the reduction of a wide variety of carbonyl compounds including quinones, prostaglandins, menadione, plus various xenobiotics. Catalyzes the reduction of the antitumor anthracyclines doxorubicin and daunorubicin to the cardiotoxic compounds doxorubicinol and daunorubicinol. Can convert prostaglandin E to prostaglandin F2-alpha. Can bind glutathione, which explains its higher affinity for glutathione-conjugated substrates. Catalyzes the reduction of S-nitrosoglutathione. In addition, participates in the glucocorticoid metabolism by catalyzing the NADPH-dependent cortisol/corticosterone into 20beta-dihydrocortisol (20b-DHF) or 20beta-corticosterone (20b-DHB), which are weak agonists of NR3C1 and NR3C2 in adipose tissue. This is Carbonyl reductase [NADPH] 1 from Macaca fascicularis (Crab-eating macaque).